A 169-amino-acid chain; its full sequence is Aspartic protease inhibitor 6 (169 aa).

The N-linked (GlcNAc...) asparagine glycan is linked to Asn-1. 2 disulfides stabilise this stretch: Cys-30-Cys-75 and Cys-124-Cys-134.

This sequence belongs to the protease inhibitor I3 (leguminous Kunitz-type inhibitor) family.

Its subcellular location is the vacuole. In terms of biological role, inhibitor of cathepsin D (aspartic protease). May also inhibit trypsin and chymotrypsin (serine proteases). Protects the plant by inhibiting proteases of invading organisms. In Solanum tuberosum (Potato), this protein is Aspartic protease inhibitor 6.